The sequence spans 185 residues: Ribosome-recycling factor (185 aa).

This sequence belongs to the RRF family.

It localises to the cytoplasm. Functionally, responsible for the release of ribosomes from messenger RNA at the termination of protein biosynthesis. May increase the efficiency of translation by recycling ribosomes from one round of translation to another. This Shewanella sp. (strain MR-4) protein is Ribosome-recycling factor.